A 201-amino-acid chain; its full sequence is Recombination protein RecR (201 aa).

The segment at 60 to 75 (CSVCGNVDTTDPCSIC) adopts a C4-type zinc-finger fold. The 96-residue stretch at 83 to 178 (TTIIVVEDVA…KITRLAHGVP (96 aa)) folds into the Toprim domain.

Belongs to the RecR family.

In terms of biological role, may play a role in DNA repair. It seems to be involved in an RecBC-independent recombinational process of DNA repair. It may act with RecF and RecO. This Bartonella quintana (strain Toulouse) (Rochalimaea quintana) protein is Recombination protein RecR.